The sequence spans 356 residues: Phosphate acyltransferase (356 aa).

It belongs to the PlsX family. Homodimer. Probably interacts with PlsY.

Its subcellular location is the cytoplasm. The catalysed reaction is a fatty acyl-[ACP] + phosphate = an acyl phosphate + holo-[ACP]. It functions in the pathway lipid metabolism; phospholipid metabolism. Catalyzes the reversible formation of acyl-phosphate (acyl-PO(4)) from acyl-[acyl-carrier-protein] (acyl-ACP). This enzyme utilizes acyl-ACP as fatty acyl donor, but not acyl-CoA. This Bartonella bacilliformis (strain ATCC 35685 / KC583 / Herrer 020/F12,63) protein is Phosphate acyltransferase.